The sequence spans 503 residues: Maturase K (503 aa).

The protein belongs to the intron maturase 2 family. MatK subfamily.

The protein localises to the plastid. It localises to the chloroplast. In terms of biological role, usually encoded in the trnK tRNA gene intron. Probably assists in splicing its own and other chloroplast group II introns. The chain is Maturase K from Backhousia myrtifolia (Grey myrtle).